Consider the following 88-residue polypeptide: EGTPSLGKRHNKSHTLCNRCGRRSFHVQKKTCSSCGYPAAKMRSHNWALKAKRRRTTGTGRMAYLKHVTRRFKNGFQTGVAKAQTPSA.

Residues C17, C20, C32, and C35 each contribute to the Zn(2+) site. A C4-type zinc finger spans residues 17 to 35; it reads CNRCGRRSFHVQKKTCSSC.

This sequence belongs to the eukaryotic ribosomal protein eL37 family. The cofactor is Zn(2+).

In terms of biological role, binds to the 23S rRNA. In Candida albicans (Yeast), this protein is Large ribosomal subunit protein eL37 (RPL37).